The sequence spans 553 residues: Rhodopsin kinase GRK7 (553 aa).

At Ser-36 the chain carries Phosphoserine; by PKA. In terms of domain architecture, RGS spans 56-176 (FHSLCEQQPI…VTSAFYDKFL (121 aa)). Residues 191 to 454 (FTEFRVLGKG…SDDPRKHHFF (264 aa)) enclose the Protein kinase domain. ATP is bound by residues 197–205 (LGKGGFGEV) and Lys-220. Asp-316 (proton acceptor) is an active-site residue. Residues 455-520 (KTINFPRLEA…GAVPIAWQEE (66 aa)) enclose the AGC-kinase C-terminal domain. At Cys-550 the chain carries Cysteine methyl ester. Cys-550 is lipidated: S-geranylgeranyl cysteine. The propeptide at 551-553 (LLL) is removed in mature form.

Belongs to the protein kinase superfamily. AGC Ser/Thr protein kinase family. GPRK subfamily. In terms of assembly, interacts (when prenylated) with PDE6D; this promotes release from membranes. In terms of processing, autophosphorylated in vitro at Ser-490. Phosphorylation at Ser-36 is regulated by light and activated by cAMP. Retinal cones, outer and inner segments.

The protein localises to the membrane. It catalyses the reaction L-threonyl-[rhodopsin] + ATP = O-phospho-L-threonyl-[rhodopsin] + ADP + H(+). It carries out the reaction L-seryl-[rhodopsin] + ATP = O-phospho-L-seryl-[rhodopsin] + ADP + H(+). With respect to regulation, inhibited by phosphorylation of Ser-36. Retina-specific kinase involved in the shutoff of the photoresponse and adaptation to changing light conditions via cone opsin phosphorylation, including rhodopsin (RHO). This is Rhodopsin kinase GRK7 (GRK7) from Homo sapiens (Human).